A 209-amino-acid polypeptide reads, in one-letter code: Uracil phosphoribosyltransferase (209 aa).

Residues R79, R104, and 131 to 139 (DPMLATGGS) contribute to the 5-phospho-alpha-D-ribose 1-diphosphate site. Residues V194 and 199-201 (GDA) each bind uracil. A 5-phospho-alpha-D-ribose 1-diphosphate-binding site is contributed by D200.

It belongs to the UPRTase family. It depends on Mg(2+) as a cofactor.

The enzyme catalyses UMP + diphosphate = 5-phospho-alpha-D-ribose 1-diphosphate + uracil. Its pathway is pyrimidine metabolism; UMP biosynthesis via salvage pathway; UMP from uracil: step 1/1. Its activity is regulated as follows. Allosterically activated by GTP. In terms of biological role, catalyzes the conversion of uracil and 5-phospho-alpha-D-ribose 1-diphosphate (PRPP) to UMP and diphosphate. The sequence is that of Uracil phosphoribosyltransferase from Clostridium botulinum (strain ATCC 19397 / Type A).